The chain runs to 475 residues: 7-dehydrocholesterol reductase (475 aa).

The tract at residues 1-21 (MAAKSQPSAPKTKSTSGLTNG) is disordered. Position 14 is a phosphoserine (Ser14). A run of 6 helical transmembrane segments spans residues 40–60 (LASVIFLLLFAPFIVYYFIMA), 151–173 (WLLTHLLWFANAHLLGWFSPTII), 178–200 (IPLLWCANILGYTVSTFAMVKGY), 266–286 (VTNSMVLVNILQAIYVLDFFW), 306–326 (LGWGDCVWLPYLYTLQGLYLV), and 331–351 (QLPTYYALGVLLLGLLGYYIF). NADP(+)-binding positions include Lys358, Arg362, Leu395, Trp400, and 407-408 (NY). Residues 420-440 (LACGGGHLLPYFYIIFMAILL) form a helical membrane-spanning segment. Residues Asp447, 451-455 (CANKY), and Tyr462 each bind NADP(+).

This sequence belongs to the ERG4/ERG24 family. As to quaternary structure, interacts with DHCR24; this interaction regulates DHCR7 activity. Interacts with TMEM147.

The protein resides in the endoplasmic reticulum membrane. The catalysed reaction is cholesterol + NADP(+) = 7-dehydrocholesterol + NADPH + H(+). It carries out the reaction 7-dehydrodesmosterol + NADPH + H(+) = desmosterol + NADP(+). The enzyme catalyses 5,6alpha-epoxy-5alpha-cholestan-3beta-ol + H2O = 5alpha-cholestane-3beta,5,6beta-triol. It catalyses the reaction 5,6beta-epoxy-5beta-cholestan-3beta-ol + H2O = 5alpha-cholestane-3beta,5,6beta-triol. Its pathway is steroid biosynthesis; cholesterol biosynthesis. In terms of biological role, oxidoreductase that catalyzes the last step of the cholesterol synthesis pathway, which transforms cholesta-5,7-dien-3beta-ol (7-dehydrocholesterol,7-DHC) into cholesterol by reducing the C7-C8 double bond of its sterol core. Can also metabolize cholesta-5,7,24-trien-3beta-ol (7-dehydrodemosterol, 7-DHD) to desmosterol, which is then metabolized by the Delta(24)-sterol reductase (DHCR24) to cholesterol. Modulates ferroptosis (a form of regulated cell death driven by iron-dependent lipid peroxidation) through the metabolic breakdown of the anti-ferroptotic metabolites 7-DHC and 7-DHD which, when accumulated, divert the propagation of peroxyl radical-mediated damage from phospholipid components to its sterol core, protecting plasma and mitochondrial membranes from phospholipid autoxidation. Functionally, component of the microsomal antiestrogen binding site (AEBS), a multiproteic complex at the ER membrane that consists of an association between cholestenol Delta-isomerase/EBP and DHCR7. This complex is responsible for cholesterol-5,6-epoxide hydrolase (ChEH) activity, which consists in the hydration of cholesterol-5,6-epoxides (5,6-EC) into cholestane-3beta,5alpha,6beta-triol (CT). The precise role of each component of this complex has not been described yet. The polypeptide is 7-dehydrocholesterol reductase (DHCR7) (Bos taurus (Bovine)).